Consider the following 338-residue polypeptide: Elongation factor Ts, mitochondrial (338 aa).

Residues 1-42 constitute a mitochondrion transit peptide; sequence MSPSIAMFTLTPNARALASKTSKMDLIKNLRERTGAPIVDVK.

It belongs to the EF-Ts family.

The protein localises to the mitochondrion. Associates with the EF-Tu.GDP complex and induces the exchange of GDP to GTP. It remains bound to the aminoacyl-tRNA.EF-Tu.GTP complex up to the GTP hydrolysis stage on the ribosome. In Ostreococcus tauri, this protein is Elongation factor Ts, mitochondrial.